A 201-amino-acid polypeptide reads, in one-letter code: Small ribosomal subunit protein uS4 (201 aa).

The S4 RNA-binding domain maps to 93–153 (QRLDNIVYRL…EKSKNLVIIK (61 aa)).

Belongs to the universal ribosomal protein uS4 family. In terms of assembly, part of the 30S ribosomal subunit. Contacts protein S5. The interaction surface between S4 and S5 is involved in control of translational fidelity.

Its function is as follows. One of the primary rRNA binding proteins, it binds directly to 16S rRNA where it nucleates assembly of the body of the 30S subunit. In terms of biological role, with S5 and S12 plays an important role in translational accuracy. The polypeptide is Small ribosomal subunit protein uS4 (Latilactobacillus sakei subsp. sakei (strain 23K) (Lactobacillus sakei subsp. sakei)).